The primary structure comprises 79 residues: Small ribosomal subunit protein bS18 (79 aa).

Belongs to the bacterial ribosomal protein bS18 family. Part of the 30S ribosomal subunit. Forms a tight heterodimer with protein bS6.

In terms of biological role, binds as a heterodimer with protein bS6 to the central domain of the 16S rRNA, where it helps stabilize the platform of the 30S subunit. The sequence is that of Small ribosomal subunit protein bS18 from Nitrobacter hamburgensis (strain DSM 10229 / NCIMB 13809 / X14).